Reading from the N-terminus, the 300-residue chain is Ornithine carbamoyltransferase (300 aa).

Carbamoyl phosphate is bound by residues serine 50–threonine 53, glutamine 77, arginine 101, and histidine 128–glutamine 131. L-ornithine-binding positions include asparagine 159, aspartate 219, and serine 223–methionine 224. Residues cysteine 257 to leucine 258 and arginine 285 contribute to the carbamoyl phosphate site.

It belongs to the aspartate/ornithine carbamoyltransferase superfamily. OTCase family.

Its subcellular location is the cytoplasm. It catalyses the reaction carbamoyl phosphate + L-ornithine = L-citrulline + phosphate + H(+). It functions in the pathway amino-acid degradation; L-arginine degradation via ADI pathway; carbamoyl phosphate from L-arginine: step 2/2. Functionally, reversibly catalyzes the transfer of the carbamoyl group from carbamoyl phosphate (CP) to the N(epsilon) atom of ornithine (ORN) to produce L-citrulline. This chain is Ornithine carbamoyltransferase, found in Haloquadratum walsbyi (strain DSM 16790 / HBSQ001).